The chain runs to 155 residues: Deoxyuridine 5'-triphosphate nucleotidohydrolase (155 aa).

Substrate is bound by residues 75-77 (RSG), asparagine 88, and 92-94 (TVD).

This sequence belongs to the dUTPase family. Mg(2+) serves as cofactor.

The enzyme catalyses dUTP + H2O = dUMP + diphosphate + H(+). It functions in the pathway pyrimidine metabolism; dUMP biosynthesis; dUMP from dCTP (dUTP route): step 2/2. This enzyme is involved in nucleotide metabolism: it produces dUMP, the immediate precursor of thymidine nucleotides and it decreases the intracellular concentration of dUTP so that uracil cannot be incorporated into DNA. The sequence is that of Deoxyuridine 5'-triphosphate nucleotidohydrolase from Caulobacter vibrioides (strain ATCC 19089 / CIP 103742 / CB 15) (Caulobacter crescentus).